The following is a 275-amino-acid chain: Large ribosomal subunit protein uL2 (275 aa).

A compositionally biased stretch (polar residues) spans 35–49 (DSQSSTAGRNNNGRI). Disordered regions lie at residues 35 to 59 (DSQS…GGHK) and 224 to 275 (AMNP…RHKR). Over residues 50 to 59 (TTRHKGGGHK) the composition is skewed to basic residues.

The protein belongs to the universal ribosomal protein uL2 family. Part of the 50S ribosomal subunit. Forms a bridge to the 30S subunit in the 70S ribosome.

One of the primary rRNA binding proteins. Required for association of the 30S and 50S subunits to form the 70S ribosome, for tRNA binding and peptide bond formation. It has been suggested to have peptidyltransferase activity; this is somewhat controversial. Makes several contacts with the 16S rRNA in the 70S ribosome. In Burkholderia cenocepacia (strain HI2424), this protein is Large ribosomal subunit protein uL2.